The following is a 359-amino-acid chain: Protein Wnt-5b (359 aa).

Residues 1 to 17 (MPSLLLVVVAALLSSWA) form the signal peptide. Cysteines 83 and 94 form a disulfide. N-linked (GlcNAc...) asparagine glycans are attached at residues Asn93 and Asn99. 10 cysteine pairs are disulfide-bonded: Cys133-Cys141, Cys143-Cys161, Cys217-Cys231, Cys219-Cys226, Cys288-Cys319, Cys304-Cys314, Cys318-Cys358, Cys334-Cys349, Cys336-Cys346, and Cys341-Cys342. Ser223 carries the O-palmitoleoyl serine; by PORCN lipid modification. 2 N-linked (GlcNAc...) asparagine glycosylation sites follow: Asn291 and Asn305.

It belongs to the Wnt family. Interacts with PORCN. Palmitoleoylation is required for efficient binding to frizzled receptors. Depalmitoleoylation leads to Wnt signaling pathway inhibition.

The protein localises to the secreted. Its subcellular location is the extracellular space. The protein resides in the extracellular matrix. Functionally, ligand for members of the frizzled family of seven transmembrane receptors. Probable developmental protein. May be a signaling molecule which affects the development of discrete regions of tissues. Is likely to signal over only few cell diameters. This chain is Protein Wnt-5b (Wnt5b), found in Mus musculus (Mouse).